Here is a 422-residue protein sequence, read N- to C-terminus: Proline-rich protein 22 (422 aa).

3 disordered regions span residues 1 to 35 (MQHP…PAPT), 306 to 325 (LCEV…SADD), and 363 to 422 (EEQP…ATPH). Residues 383–400 (GKRKASTAKKGKPGRKAR) show a composition bias toward basic residues. The segment covering 413 to 422 (PREDLGATPH) has biased composition (basic and acidic residues).

The sequence is that of Proline-rich protein 22 (PRR22) from Homo sapiens (Human).